A 108-amino-acid chain; its full sequence is Large ribosomal subunit protein bL31B (108 aa).

Positions 81–108 are disordered; the sequence is KPAQPVQAPAEEGPVVKGKKKAPAKKKK. Residues 97 to 108 are compositionally biased toward basic residues; that stretch reads KGKKKAPAKKKK.

The protein belongs to the bacterial ribosomal protein bL31 family. Type B subfamily. Part of the 50S ribosomal subunit.

The sequence is that of Large ribosomal subunit protein bL31B from Chlamydia caviae (strain ATCC VR-813 / DSM 19441 / 03DC25 / GPIC) (Chlamydophila caviae).